The chain runs to 421 residues: UDP-N-acetylglucosamine 1-carboxyvinyltransferase (421 aa).

Residue 22-23 (KN) coordinates phosphoenolpyruvate. Position 93 (R93) interacts with UDP-N-acetyl-alpha-D-glucosamine. C117 serves as the catalytic Proton donor. The residue at position 117 (C117) is a 2-(S-cysteinyl)pyruvic acid O-phosphothioketal. Residues 122–126 (RPVDL), D308, and I330 each bind UDP-N-acetyl-alpha-D-glucosamine.

This sequence belongs to the EPSP synthase family. MurA subfamily.

It localises to the cytoplasm. It carries out the reaction phosphoenolpyruvate + UDP-N-acetyl-alpha-D-glucosamine = UDP-N-acetyl-3-O-(1-carboxyvinyl)-alpha-D-glucosamine + phosphate. Its pathway is cell wall biogenesis; peptidoglycan biosynthesis. Functionally, cell wall formation. Adds enolpyruvyl to UDP-N-acetylglucosamine. The polypeptide is UDP-N-acetylglucosamine 1-carboxyvinyltransferase (Pseudomonas putida (strain W619)).